The sequence spans 61 residues: Large ribosomal subunit protein eL29y (61 aa).

Residues 1-61 (MAKSKNHTAH…KSGENAGVEE (61 aa)) form a disordered region. Over residues 15 to 31 (KAHKNGIKKPRRHRHTP) the composition is skewed to basic residues.

The protein belongs to the eukaryotic ribosomal protein eL29 family.

This is Large ribosomal subunit protein eL29y (RPL29B) from Arabidopsis thaliana (Mouse-ear cress).